A 280-amino-acid polypeptide reads, in one-letter code: Golgi phosphoprotein 3-like B (280 aa).

Residues 1 to 32 form a disordered region; the sequence is MTTLIRRGRRAEEGQERRADSEDSIKDKDEED. The span at 10-32 shows a compositional bias: basic and acidic residues; the sequence is RAEEGQERRADSEDSIKDKDEED. 4 residues coordinate a 1,2-diacyl-sn-glycero-3-phospho-(1D-myo-inositol 4-phosphate): W62, R71, R152, and R155. A beta-hairpin required for oligomerization region spans residues 171-182; the sequence is EKQNFLLFDMTT.

The protein belongs to the GOLPH3/VPS74 family. As to quaternary structure, homooligomer.

The protein localises to the golgi apparatus. The protein resides in the golgi stack membrane. Its subcellular location is the trans-Golgi network membrane. Functionally, phosphatidylinositol-4-phosphate-binding protein that may play a role in the process of vesicle budding at the Golgi and anterograde transport to the plasma membrane. This Xenopus laevis (African clawed frog) protein is Golgi phosphoprotein 3-like B (golph3l-b).